Reading from the N-terminus, the 876-residue chain is Valine--tRNA ligase (876 aa).

The 'HIGH' region signature appears at 44 to 54; that stretch reads PNVTGKLHLGH. The short motif at 520–524 is the 'KMSKS' region element; sequence KMSKS. Lysine 523 contacts ATP. A coiled-coil region spans residues 805-876; that stretch reads LEGLIDMDKE…VKARIEQLKA (72 aa).

This sequence belongs to the class-I aminoacyl-tRNA synthetase family. ValS type 1 subfamily. As to quaternary structure, monomer.

The protein resides in the cytoplasm. The catalysed reaction is tRNA(Val) + L-valine + ATP = L-valyl-tRNA(Val) + AMP + diphosphate. In terms of biological role, catalyzes the attachment of valine to tRNA(Val). As ValRS can inadvertently accommodate and process structurally similar amino acids such as threonine, to avoid such errors, it has a 'posttransfer' editing activity that hydrolyzes mischarged Thr-tRNA(Val) in a tRNA-dependent manner. The chain is Valine--tRNA ligase from Staphylococcus aureus (strain bovine RF122 / ET3-1).